Reading from the N-terminus, the 139-residue chain is Thioredoxin 2 (139 aa).

A zinc finger lies at 5–18; that stretch reads CTHCQAINRIPDDR. The Thioredoxin domain occupies 26–139; the sequence is GRCGHDLFDG…PFDSWLNESL (114 aa). A disulfide bridge links cysteine 64 with cysteine 67.

Belongs to the thioredoxin family.

The protein resides in the cytoplasm. It carries out the reaction [protein]-dithiol + NAD(+) = [protein]-disulfide + NADH + H(+). The catalysed reaction is [protein]-dithiol + NADP(+) = [protein]-disulfide + NADPH + H(+). Its function is as follows. Efficient electron donor for the essential enzyme ribonucleotide reductase. Is also able to reduce the interchain disulfide bridges of insulin. The chain is Thioredoxin 2 (trxC) from Escherichia coli O6:H1 (strain CFT073 / ATCC 700928 / UPEC).